The following is a 216-amino-acid chain: Holliday junction branch migration complex subunit RuvA (216 aa).

The interval 1-64 is domain I; it reads MISFIKGVLI…EDAQQLYGFK (64 aa). Positions 65–143 are domain II; the sequence is SKVDKKVFQE…KMANEIYAQT (79 aa). The segment at 144–163 is flexible linker; it reads SGTTTTSQDSQAQQAPTSVV. Residues 164–216 are domain III; the sequence is LANSIFNESVDALLALGYKQKDAEKMARSAMGDATTAAEVIRKALQGSIKSKG.

The protein belongs to the RuvA family. Homotetramer. Forms an RuvA(8)-RuvB(12)-Holliday junction (HJ) complex. HJ DNA is sandwiched between 2 RuvA tetramers; dsDNA enters through RuvA and exits via RuvB. An RuvB hexamer assembles on each DNA strand where it exits the tetramer. Each RuvB hexamer is contacted by two RuvA subunits (via domain III) on 2 adjacent RuvB subunits; this complex drives branch migration. In the full resolvosome a probable DNA-RuvA(4)-RuvB(12)-RuvC(2) complex forms which resolves the HJ.

Its subcellular location is the cytoplasm. Functionally, the RuvA-RuvB-RuvC complex processes Holliday junction (HJ) DNA during genetic recombination and DNA repair, while the RuvA-RuvB complex plays an important role in the rescue of blocked DNA replication forks via replication fork reversal (RFR). RuvA specifically binds to HJ cruciform DNA, conferring on it an open structure. The RuvB hexamer acts as an ATP-dependent pump, pulling dsDNA into and through the RuvAB complex. HJ branch migration allows RuvC to scan DNA until it finds its consensus sequence, where it cleaves and resolves the cruciform DNA. The sequence is that of Holliday junction branch migration complex subunit RuvA from Francisella tularensis subsp. holarctica (strain FTNF002-00 / FTA).